Reading from the N-terminus, the 552-residue chain is Lon protease 2 (552 aa).

An ATP-binding site is contributed by 97-104 (GPPGVGKT). The region spanning 349–535 (EPQVGIVNGL…QEVLDEILVN (187 aa)) is the Lon proteolytic domain. Active-site residues include S445 and K488.

This sequence belongs to the peptidase S16 family. As to quaternary structure, homohexamer. Organized in a ring with a central cavity.

Its subcellular location is the cytoplasm. It carries out the reaction Hydrolysis of proteins in presence of ATP.. In terms of biological role, ATP-dependent serine protease that mediates the selective degradation of mutant and abnormal proteins as well as certain short-lived regulatory proteins. Required for cellular homeostasis and for survival from DNA damage and developmental changes induced by stress. Degrades polypeptides processively to yield small peptide fragments that are 5 to 10 amino acids long. Binds to DNA in a double-stranded, site-specific manner. The polypeptide is Lon protease 2 (lon2) (Bacillus subtilis (strain 168)).